The chain runs to 787 residues: uncharacterized protein (787 aa).

N-acetylmethionine is present on M1. Disordered regions lie at residues 1–115, 130–200, and 217–238; these read MFDG…NDHK, TNPF…QRSE, and VSSG…ASQD. Over residues 36-54 the composition is skewed to polar residues; it reads VPSTIKKSTNIARTSTAET. S63 bears the Phosphoserine mark. Residues 130-142 show a composition bias toward polar residues; it reads TNPFTTSANSNAH. The span at 160–169 shows a compositional bias: low complexity; the sequence is SITTSISNNT. The segment covering 170–184 has biased composition (basic and acidic residues); the sequence is TKEEIESNNDSERDS. A compositionally biased stretch (low complexity) spans 218-230; it reads SSGSSLSLDTSEN. S254, S313, S342, S345, S390, S477, S492, S546, S683, and S699 each carry phosphoserine.

It localises to the cytoplasm. This is an uncharacterized protein from Saccharomyces cerevisiae (strain ATCC 204508 / S288c) (Baker's yeast).